The chain runs to 211 residues: MRQQQQQQQESRFKRTCVFCGSSQGNKTTYRDAAVDLAKELVARGIDLVYGGGSIGLMGLVSQAVYDGGRHVIGVIPKTLMTPEIIGETVGEVRPVSDMHQRKAEMARQSDAFIALPGGYGTLEELLEVITWAQLGIHHKPVGLLNVDGYYNSLLTFIDQAVEEGFISPSARRIIVSAPTAQELMDKLEEYVPYHDRVASGLNWETGHLGF.

Residues glutamate 84, 102 to 103 (RK), 119 to 125 (GYGTLEE), and threonine 131 each bind substrate.

It belongs to the LOG family. In terms of tissue distribution, expressed in roots, leaves, stems, tiller buds, shoot apex, immature inflorescences and flowers.

The catalysed reaction is N(6)-(dimethylallyl)adenosine 5'-phosphate + H2O = N(6)-dimethylallyladenine + D-ribose 5-phosphate. It catalyses the reaction 9-ribosyl-trans-zeatin 5'-phosphate + H2O = trans-zeatin + D-ribose 5-phosphate. In terms of biological role, cytokinin-activating enzyme working in the direct activation pathway. Phosphoribohydrolase that converts inactive cytokinin nucleotides to the biologically active free-base forms. In Oryza sativa subsp. japonica (Rice), this protein is Probable cytokinin riboside 5'-monophosphate phosphoribohydrolase LOGL3 (LOGL3).